The following is a 79-amino-acid chain: U1-plectoxin-Pt1c (79 aa).

The signal sequence occupies residues 1–18 (HLILASALICALVVCTFA). Positions 19-31 (EEQVNVPFLPDER) are excised as a propeptide. 5 cysteine pairs are disulfide-bonded: cysteine 35-cysteine 49, cysteine 42-cysteine 55, cysteine 48-cysteine 66, cysteine 52-cysteine 75, and cysteine 57-cysteine 64. Residues 78–79 (RR) constitute a propeptide that is removed on maturation.

This sequence belongs to the neurotoxin 02 (plectoxin) family. 02 (plectoxin) subfamily. In terms of tissue distribution, expressed by the venom gland.

Its subcellular location is the secreted. In terms of biological role, potent toxin that may paralyze and/or kill insect pests such as H.virescens (lepidoptera), S.exigua (beet armyworm) and M.sexta (tobacco hornworm). This Plectreurys tristis (Spider) protein is U1-plectoxin-Pt1c.